The sequence spans 342 residues: Cell division protein ZipA (342 aa).

The Periplasmic segment spans residues methionine 1–leucine 6. The helical transmembrane segment at valine 7–isoleucine 27 threads the bilayer. At arginine 28–alanine 342 the chain is on the cytoplasmic side. The interval lysine 33–valine 57 is disordered. Positions glutamine 47–valine 57 are enriched in basic and acidic residues.

It belongs to the ZipA family. As to quaternary structure, interacts with FtsZ via their C-terminal domains.

It is found in the cell inner membrane. Its function is as follows. Essential cell division protein that stabilizes the FtsZ protofilaments by cross-linking them and that serves as a cytoplasmic membrane anchor for the Z ring. Also required for the recruitment to the septal ring of downstream cell division proteins. This Shewanella sp. (strain W3-18-1) protein is Cell division protein ZipA.